Reading from the N-terminus, the 362-residue chain is 3-dehydroquinate synthase (362 aa).

NAD(+)-binding positions include 71 to 76, 105 to 109, 129 to 130, K142, K151, and 169 to 172; these read DGEQYK, GVIGD, TT, and CLKT. The Zn(2+) site is built by E184, H247, and H264.

This sequence belongs to the sugar phosphate cyclases superfamily. Dehydroquinate synthase family. The cofactor is Co(2+). Requires Zn(2+) as cofactor. NAD(+) is required as a cofactor.

It localises to the cytoplasm. The enzyme catalyses 7-phospho-2-dehydro-3-deoxy-D-arabino-heptonate = 3-dehydroquinate + phosphate. The protein operates within metabolic intermediate biosynthesis; chorismate biosynthesis; chorismate from D-erythrose 4-phosphate and phosphoenolpyruvate: step 2/7. Functionally, catalyzes the conversion of 3-deoxy-D-arabino-heptulosonate 7-phosphate (DAHP) to dehydroquinate (DHQ). This chain is 3-dehydroquinate synthase, found in Salmonella schwarzengrund (strain CVM19633).